Reading from the N-terminus, the 456-residue chain is Signal recognition particle 54 kDa protein (456 aa).

GTP-binding positions include glycine 104–threonine 111, aspartate 184–arginine 188, and threonine 242–aspartate 245.

Belongs to the GTP-binding SRP family. SRP54 subfamily. As to quaternary structure, part of the signal recognition particle protein translocation system, which is composed of SRP and FtsY. Archaeal SRP consists of a 7S RNA molecule of 300 nucleotides and two protein subunits: SRP54 and SRP19.

Its subcellular location is the cytoplasm. The enzyme catalyses GTP + H2O = GDP + phosphate + H(+). Functionally, involved in targeting and insertion of nascent membrane proteins into the cytoplasmic membrane. Binds to the hydrophobic signal sequence of the ribosome-nascent chain (RNC) as it emerges from the ribosomes. The SRP-RNC complex is then targeted to the cytoplasmic membrane where it interacts with the SRP receptor FtsY. The protein is Signal recognition particle 54 kDa protein of Thermoplasma acidophilum (strain ATCC 25905 / DSM 1728 / JCM 9062 / NBRC 15155 / AMRC-C165).